The chain runs to 344 residues: L-rhamnose-proton symporter (344 aa).

The next 10 helical transmembrane spans lie at P4–A24, W38–L58, F68–I88, M101–L121, T137–L157, L175–A195, I207–V227, L255–F275, I290–F310, and L324–A344.

It belongs to the L-rhamnose transporter (TC 2.A.7.6) family.

The protein localises to the cell inner membrane. The catalysed reaction is L-rhamnopyranose(in) + H(+)(in) = L-rhamnopyranose(out) + H(+)(out). Functionally, uptake of L-rhamnose across the cytoplasmic membrane with the concomitant transport of protons into the cell (symport system). This is L-rhamnose-proton symporter from Pectobacterium carotovorum subsp. carotovorum (strain PC1).